The sequence spans 131 residues: Large ribosomal subunit protein bL17 (131 aa).

Belongs to the bacterial ribosomal protein bL17 family. In terms of assembly, part of the 50S ribosomal subunit. Contacts protein L32.

This Bordetella avium (strain 197N) protein is Large ribosomal subunit protein bL17.